We begin with the raw amino-acid sequence, 431 residues long: Serine--tRNA ligase (431 aa).

Position 235–237 (235–237 (TSE)) interacts with L-serine. 266-268 (RSE) is a binding site for ATP. An L-serine-binding site is contributed by Glu289. 353-356 (EISS) is a binding site for ATP. Ser388 provides a ligand contact to L-serine.

This sequence belongs to the class-II aminoacyl-tRNA synthetase family. Type-1 seryl-tRNA synthetase subfamily. Homodimer. The tRNA molecule binds across the dimer.

Its subcellular location is the cytoplasm. The catalysed reaction is tRNA(Ser) + L-serine + ATP = L-seryl-tRNA(Ser) + AMP + diphosphate + H(+). The enzyme catalyses tRNA(Sec) + L-serine + ATP = L-seryl-tRNA(Sec) + AMP + diphosphate + H(+). It functions in the pathway aminoacyl-tRNA biosynthesis; selenocysteinyl-tRNA(Sec) biosynthesis; L-seryl-tRNA(Sec) from L-serine and tRNA(Sec): step 1/1. Its function is as follows. Catalyzes the attachment of serine to tRNA(Ser). Is also able to aminoacylate tRNA(Sec) with serine, to form the misacylated tRNA L-seryl-tRNA(Sec), which will be further converted into selenocysteinyl-tRNA(Sec). The protein is Serine--tRNA ligase of Paraburkholderia phytofirmans (strain DSM 17436 / LMG 22146 / PsJN) (Burkholderia phytofirmans).